Here is a 453-residue protein sequence, read N- to C-terminus: MSPQTETKAGVGFKAGVKEYKLTYYTPEYETKDTDILAAFRVTPQPGVPPEERGAAVAAESSTGTWTTVWTDGLTSLDRYKGRCYHIEPVPGEEEQFIAYVAYPLDLFEEGSVTNMFTSIVGNVFGFKALRALRLEDLRIPVAYVKTFQGPPHGIQVERDKLNKYGRPLLGCTIKPKLGLSAKNYGRAVYECLRGGLDFTKDDENVNSQPFMRWRDRFLFCAEAIYKSQAETGEIKGHYLNATAGTCEEMIKRAVFARELGVPIVMHDYLTGGFTANTSLSHYCRDNGLLLHIHRAMHAVIDRQKNHGMHFRVLAKALRMSGGDHVHSGTVVGKLEGERDITLGFVDLLRDDYIEKDRSRGVYFTQDWVSLPGVLPVASRGIHVWHMPALTEIFGDDSVLQFGGGTLGHPWGNAPGAVANRVALEACVKARNEGRDLAAEGGEIIREACKWSP.

A propeptide spanning residues 1–2 (MS) is cleaved from the precursor. The residue at position 3 (Pro-3) is an N-acetylproline. An N6,N6,N6-trimethyllysine modification is found at Lys-14. Asn-123 and Thr-173 together coordinate substrate. Lys-175 acts as the Proton acceptor in catalysis. Lys-177 is a substrate binding site. 3 residues coordinate Mg(2+): Lys-201, Asp-203, and Glu-204. Lys-201 is subject to N6-carboxylysine. The active-site Proton acceptor is His-294. Substrate contacts are provided by Arg-295, His-327, and Ser-379.

This sequence belongs to the RuBisCO large chain family. Type I subfamily. As to quaternary structure, heterohexadecamer of 8 large chains and 8 small chains; disulfide-linked. The disulfide link is formed within the large subunit homodimers. It depends on Mg(2+) as a cofactor. The disulfide bond which can form in the large chain dimeric partners within the hexadecamer appears to be associated with oxidative stress and protein turnover.

Its subcellular location is the plastid. The protein localises to the chloroplast. It catalyses the reaction 2 (2R)-3-phosphoglycerate + 2 H(+) = D-ribulose 1,5-bisphosphate + CO2 + H2O. The catalysed reaction is D-ribulose 1,5-bisphosphate + O2 = 2-phosphoglycolate + (2R)-3-phosphoglycerate + 2 H(+). RuBisCO catalyzes two reactions: the carboxylation of D-ribulose 1,5-bisphosphate, the primary event in carbon dioxide fixation, as well as the oxidative fragmentation of the pentose substrate in the photorespiration process. Both reactions occur simultaneously and in competition at the same active site. This chain is Ribulose bisphosphate carboxylase large chain, found in Galium lucidum.